We begin with the raw amino-acid sequence, 398 residues long: Phosphoglycerate kinase (398 aa).

Substrate-binding positions include 21–23 (DIN), Arg36, 59–62 (HFGR), Arg118, and Arg151. Residues Lys201, Glu323, and 353 to 356 (GGDT) each bind ATP.

Belongs to the phosphoglycerate kinase family. As to quaternary structure, monomer.

It localises to the cytoplasm. The enzyme catalyses (2R)-3-phosphoglycerate + ATP = (2R)-3-phospho-glyceroyl phosphate + ADP. The protein operates within carbohydrate degradation; glycolysis; pyruvate from D-glyceraldehyde 3-phosphate: step 2/5. In Ruegeria pomeroyi (strain ATCC 700808 / DSM 15171 / DSS-3) (Silicibacter pomeroyi), this protein is Phosphoglycerate kinase.